A 200-amino-acid chain; its full sequence is Peptidyl-tRNA hydrolase (200 aa).

Tyr-15 lines the tRNA pocket. The active-site Proton acceptor is the His-20. TRNA-binding residues include Phe-66, Asn-68, and Asn-114.

The protein belongs to the PTH family. Monomer.

It is found in the cytoplasm. It catalyses the reaction an N-acyl-L-alpha-aminoacyl-tRNA + H2O = an N-acyl-L-amino acid + a tRNA + H(+). In terms of biological role, hydrolyzes ribosome-free peptidyl-tRNAs (with 1 or more amino acids incorporated), which drop off the ribosome during protein synthesis, or as a result of ribosome stalling. Its function is as follows. Catalyzes the release of premature peptidyl moieties from peptidyl-tRNA molecules trapped in stalled 50S ribosomal subunits, and thus maintains levels of free tRNAs and 50S ribosomes. The polypeptide is Peptidyl-tRNA hydrolase (Ralstonia nicotianae (strain ATCC BAA-1114 / GMI1000) (Ralstonia solanacearum)).